Consider the following 203-residue polypeptide: NAD(P)H dehydrogenase (quinone) (203 aa).

The 192-residue stretch at 3–194 folds into the Flavodoxin-like domain; the sequence is VLIVYYSLYG…DAARFQGRHI (192 aa). FMN-binding positions include 9–14 and 82–84; these read SLYGHV and TRF. Tyr11 serves as a coordination point for NAD(+). Trp102 lines the substrate pocket. FMN is bound by residues 117–123 and His138; that span reads STATQHG.

The protein belongs to the WrbA family. FMN is required as a cofactor.

The enzyme catalyses a quinone + NADH + H(+) = a quinol + NAD(+). It catalyses the reaction a quinone + NADPH + H(+) = a quinol + NADP(+). The protein is NAD(P)H dehydrogenase (quinone) of Solidesulfovibrio magneticus (strain ATCC 700980 / DSM 13731 / RS-1) (Desulfovibrio magneticus).